We begin with the raw amino-acid sequence, 126 residues long: uncharacterized protein (126 aa).

One can recognise a VOC domain in the interval arginine 4 to arginine 126. A divalent metal cation is bound by residues histidine 7, glutamate 42, histidine 74, and glutamate 122.

This sequence belongs to the glyoxalase I family.

This is an uncharacterized protein from Bacillus subtilis (strain 168).